Reading from the N-terminus, the 123-residue chain is UPF0102 protein PputGB1_4524 (123 aa).

This sequence belongs to the UPF0102 family.

The polypeptide is UPF0102 protein PputGB1_4524 (Pseudomonas putida (strain GB-1)).